A 351-amino-acid chain; its full sequence is tRNA pseudouridine synthase D (351 aa).

The active-site Nucleophile is Asp-96. The TRUD domain maps to 174–304; the sequence is GAPNYFGPQR…MKPERRPLVA (131 aa). The disordered stretch occupies residues 244–268; it reads VLPGEPEPSGAGPTGPLWGDGGTLA.

The protein belongs to the pseudouridine synthase TruD family.

The catalysed reaction is uridine(13) in tRNA = pseudouridine(13) in tRNA. Functionally, responsible for synthesis of pseudouridine from uracil-13 in transfer RNAs. This chain is tRNA pseudouridine synthase D, found in Marinobacter nauticus (strain ATCC 700491 / DSM 11845 / VT8) (Marinobacter aquaeolei).